The chain runs to 341 residues: tRNA N6-adenosine threonylcarbamoyltransferase (341 aa).

Fe cation-binding residues include His111 and His115. Substrate contacts are provided by residues 134–138 (LVSGG), Asp167, Gly180, and Asn276. Position 304 (Asp304) interacts with Fe cation.

It belongs to the KAE1 / TsaD family. Fe(2+) serves as cofactor.

The protein localises to the cytoplasm. The catalysed reaction is L-threonylcarbamoyladenylate + adenosine(37) in tRNA = N(6)-L-threonylcarbamoyladenosine(37) in tRNA + AMP + H(+). Functionally, required for the formation of a threonylcarbamoyl group on adenosine at position 37 (t(6)A37) in tRNAs that read codons beginning with adenine. Is involved in the transfer of the threonylcarbamoyl moiety of threonylcarbamoyl-AMP (TC-AMP) to the N6 group of A37, together with TsaE and TsaB. TsaD likely plays a direct catalytic role in this reaction. In Pseudomonas syringae pv. tomato (strain ATCC BAA-871 / DC3000), this protein is tRNA N6-adenosine threonylcarbamoyltransferase.